The chain runs to 1238 residues: Protein translocase subunit SecA 1 (1238 aa).

ATP contacts are provided by residues Gln107, 125-129 (GEGKT), and Asp570. The segment at 1194 to 1220 (AAGSEGRAEGSVDTVRVEEPRIGRNAP) is disordered. Over residues 1199-1215 (GRAEGSVDTVRVEEPRI) the composition is skewed to basic and acidic residues. The Zn(2+) site is built by Cys1221, Cys1223, Cys1232, and Cys1233.

Belongs to the SecA family. As to quaternary structure, monomer and homodimer. Part of the essential Sec protein translocation apparatus which comprises SecA, SecYEG and auxiliary proteins SecDF. Other proteins may also be involved. Zn(2+) is required as a cofactor.

It localises to the cell inner membrane. It is found in the cytoplasm. It catalyses the reaction ATP + H2O + cellular proteinSide 1 = ADP + phosphate + cellular proteinSide 2.. In terms of biological role, part of the Sec protein translocase complex. Interacts with the SecYEG preprotein conducting channel. Has a central role in coupling the hydrolysis of ATP to the transfer of proteins into and across the cell membrane, serving as an ATP-driven molecular motor driving the stepwise translocation of polypeptide chains across the membrane. This Rhodopirellula baltica (strain DSM 10527 / NCIMB 13988 / SH1) protein is Protein translocase subunit SecA 1.